Reading from the N-terminus, the 56-residue chain is Ovomucoid (56 aa).

Residues 6–56 (VDCSEYPKPDCTTEERPLCGSDNKTYGNKCNFCNAVVESNGTLTLSHFGKC) enclose the Kazal-like domain. Cystine bridges form between Cys8–Cys38, Cys16–Cys35, and Cys24–Cys56. An N-linked (GlcNAc...) asparagine glycan is attached at Asn45.

It localises to the secreted. This chain is Ovomucoid, found in Francolinus pondicerianus (Grey francolin).